A 229-amino-acid chain; its full sequence is MAKKKAFIPFFYFTSIVFLPWLISLCCNKSLKTWITNWWNTRQCETFLNDIQEKSVLEKFIQLEDLFQLDEMIKEYPETDLQQFRLGIHKETIQFIKIHNEYRIHTILHFSTNLISFVILSGYSFWAKEKLFILNSWVQEFLYNLSDTIKAFSILLVTDLCIGFHSPHGWELMIGYIYKDFGFAHYEQILSGLVSTFPVILDTIFKYWIFRYLNRVSPSLVVIYHAIND.

3 consecutive transmembrane segments (helical) span residues 6–26, 107–127, and 189–209; these read AFIP…ISLC, ILHF…SFWA, and ILSG…KYWI.

It belongs to the CemA family.

The protein resides in the plastid. It is found in the chloroplast inner membrane. The enzyme catalyses K(+)(in) + H(+)(out) = K(+)(out) + H(+)(in). Contributes to K(+)/H(+) antiport activity by supporting proton efflux to control proton extrusion and homeostasis in chloroplasts in a light-dependent manner to modulate photosynthesis. Prevents excessive induction of non-photochemical quenching (NPQ) under continuous-light conditions. Indirectly promotes efficient inorganic carbon uptake into chloroplasts. This chain is Potassium/proton antiporter CemA, found in Crucihimalaya wallichii (Rock-cress).